Consider the following 435-residue polypeptide: Mitochondrial association factor 1 form a1 (435 aa).

An N-terminal signal peptide occupies residues M1–G20. Residues A21–R96 lie on the Vacuolar side of the membrane. Residues I97–R117 traverse the membrane as a helical segment. The Cytoplasmic segment spans residues R118–D435. The segment at R120–T159 is disordered.

Interacts with host SAMM50.

It localises to the parasitophorous vacuole membrane. Functionally, during host cell infection by tachyzoites, does not play a role in tethering the parasitophorous vacuole to the host mitochondria, probably because it does not bind host mitochondrial import protein TOMM70. In Toxoplasma gondii (strain ATCC 50611 / Me49), this protein is Mitochondrial association factor 1 form a1.